Consider the following 37-residue polypeptide: Large ribosomal subunit protein bL36 (37 aa).

It belongs to the bacterial ribosomal protein bL36 family.

The chain is Large ribosomal subunit protein bL36 from Aquifex aeolicus (strain VF5).